The primary structure comprises 351 residues: Transmembrane protein 184 homolog DDB_G0279555 (351 aa).

The helical transmembrane segment at 1–21 (MWIVAGVCSGVAILLSFYLIY) threads the bilayer. Asn26 carries an N-linked (GlcNAc...) asparagine glycan. Transmembrane regions (helical) follow at residues 39-59 (ILIM…FVEL), 73-93 (YVLY…FDLV), 127-147 (FVLQ…VLET), 162-182 (YVWL…FLVL), and 206-226 (ILFF…FGVI). Asn236 carries N-linked (GlcNAc...) asparagine glycosylation. Residues 241–261 (LQDFITCVEMVILAICHHFFF) traverse the membrane as a helical segment. N-linked (GlcNAc...) asparagine glycans are attached at residues Asn301 and Asn304. Positions 327–351 (HNHPTTKKKDEESNLLEPEDKDIII) are disordered. Positions 339–351 (SNLLEPEDKDIII) are enriched in acidic residues.

This sequence belongs to the TMEM184 family.

Its subcellular location is the cell membrane. Functionally, probable transporter. In Dictyostelium discoideum (Social amoeba), this protein is Transmembrane protein 184 homolog DDB_G0279555 (tmem184C).